Consider the following 188-residue polypeptide: Ribosomal RNA small subunit methyltransferase G (188 aa).

Residues glycine 69, phenylalanine 74, 119 to 120 (VQ), and arginine 134 contribute to the S-adenosyl-L-methionine site.

The protein belongs to the methyltransferase superfamily. RNA methyltransferase RsmG family.

It is found in the cytoplasm. It carries out the reaction guanosine(527) in 16S rRNA + S-adenosyl-L-methionine = N(7)-methylguanosine(527) in 16S rRNA + S-adenosyl-L-homocysteine. Functionally, specifically methylates the N7 position of guanine in position 527 of 16S rRNA. The polypeptide is Ribosomal RNA small subunit methyltransferase G (Campylobacter jejuni (strain RM1221)).